Consider the following 388-residue polypeptide: GTPase Obg (388 aa).

The Obg domain occupies 4–162 (SNFVDYVKIY…MTVILELKLL (159 aa)). The tract at residues 18 to 45 (KGGRGSTHMRREKYTPNGGPDGGDGGRG) is disordered. Over residues 36–45 (GPDGGDGGRG) the composition is skewed to gly residues. An OBG-type G domain is found at 163–329 (ADVGLVGFPN…LKDILWTELN (167 aa)). GTP-binding positions include 169-176 (GFPNAGKS), 194-198 (FTTLE), 216-219 (DIPG), 283-286 (TKSD), and 310-312 (SSV). Mg(2+)-binding residues include S176 and T196. The tract at residues 352–388 (LKDMGEDEELDYEYEDDGDGDEDDLDYEYEEEDWEDK) is disordered. The span at 356–388 (GEDEELDYEYEDDGDGDEDDLDYEYEEEDWEDK) shows a compositional bias: acidic residues.

It belongs to the TRAFAC class OBG-HflX-like GTPase superfamily. OBG GTPase family. Monomer. Mg(2+) serves as cofactor.

The protein resides in the cytoplasm. An essential GTPase which binds GTP, GDP and possibly (p)ppGpp with moderate affinity, with high nucleotide exchange rates and a fairly low GTP hydrolysis rate. Plays a role in control of the cell cycle, stress response, ribosome biogenesis and in those bacteria that undergo differentiation, in morphogenesis control. The chain is GTPase Obg from Bacteroides fragilis (strain ATCC 25285 / DSM 2151 / CCUG 4856 / JCM 11019 / LMG 10263 / NCTC 9343 / Onslow / VPI 2553 / EN-2).